The following is a 370-amino-acid chain: tRNA-specific 2-thiouridylase MnmA (370 aa).

ATP-binding positions include Gly-9–Ser-16 and Met-35. The interaction with target base in tRNA stretch occupies residues Asn-95–Asp-97. Cys-100 acts as the Nucleophile in catalysis. Cys-100 and Cys-198 are joined by a disulfide. Gly-124 is a binding site for ATP. Residues Lys-148–Gln-150 form an interaction with tRNA region. Cys-198 functions as the Cysteine persulfide intermediate in the catalytic mechanism. The segment at Arg-316–Tyr-317 is interaction with tRNA.

This sequence belongs to the MnmA/TRMU family.

It is found in the cytoplasm. It carries out the reaction S-sulfanyl-L-cysteinyl-[protein] + uridine(34) in tRNA + AH2 + ATP = 2-thiouridine(34) in tRNA + L-cysteinyl-[protein] + A + AMP + diphosphate + H(+). Its function is as follows. Catalyzes the 2-thiolation of uridine at the wobble position (U34) of tRNA, leading to the formation of s(2)U34. This chain is tRNA-specific 2-thiouridylase MnmA, found in Acidovorax ebreus (strain TPSY) (Diaphorobacter sp. (strain TPSY)).